Consider the following 271-residue polypeptide: MKLFGLIGEKLGHSLSPEIHNKVFKDNNIDGLYNLFSVKKDFENNIVESLKCLGVRGANVTIPYKEKVMNQLDIISHEAKAIGAVNTILIKDGKSYGYNTDYYGFGKMLERAKVDIEGNSFFVLGAGGAARSILKYLEDSKAKKIVLVSRDKEKVFKKFKDFNINFMSYGELEEIHEEFALINTTPCGMYPNTNSVAVSEKVIKKFKVALDIVYNPLETKFLKMAKDNGLKTVDGLFMLVGQGVKAEEIWNGIKVDKSTEENIYEELKCRF.

Shikimate contacts are provided by residues 14 to 16 and threonine 61; that span reads SLS. The active-site Proton acceptor is lysine 65. Asparagine 86 and aspartate 101 together coordinate shikimate. NADP(+)-binding positions include 125–129 and isoleucine 212; that span reads GAGGA. Tyrosine 214 provides a ligand contact to shikimate. Glycine 235 contributes to the NADP(+) binding site.

Belongs to the shikimate dehydrogenase family. As to quaternary structure, homodimer.

It carries out the reaction shikimate + NADP(+) = 3-dehydroshikimate + NADPH + H(+). The protein operates within metabolic intermediate biosynthesis; chorismate biosynthesis; chorismate from D-erythrose 4-phosphate and phosphoenolpyruvate: step 4/7. In terms of biological role, involved in the biosynthesis of the chorismate, which leads to the biosynthesis of aromatic amino acids. Catalyzes the reversible NADPH linked reduction of 3-dehydroshikimate (DHSA) to yield shikimate (SA). The chain is Shikimate dehydrogenase (NADP(+)) from Clostridium perfringens (strain SM101 / Type A).